A 277-amino-acid polypeptide reads, in one-letter code: Large ribosomal subunit protein uL2 (277 aa).

Residues 215–263 are disordered; that stretch reads LGRKPHQRGSAMNPVDHPHGGGEGRTGAGRVPVSPWGQPAKGLKTRKKR.

This sequence belongs to the universal ribosomal protein uL2 family. As to quaternary structure, part of the 50S ribosomal subunit. Forms a bridge to the 30S subunit in the 70S ribosome.

Functionally, one of the primary rRNA binding proteins. Required for association of the 30S and 50S subunits to form the 70S ribosome, for tRNA binding and peptide bond formation. It has been suggested to have peptidyltransferase activity; this is somewhat controversial. Makes several contacts with the 16S rRNA in the 70S ribosome. The protein is Large ribosomal subunit protein uL2 of Deinococcus geothermalis (strain DSM 11300 / CIP 105573 / AG-3a).